The primary structure comprises 449 residues: MHLSSRANAPAPHKPYNPFYLQLYFWVIIAIILGALLGHCYPVVGQQLKPLGDAFIKLVKMIISPVIFLTIVTGIASVAHVGTVARVFGKAMVYFLFFSTLALLLGLVVAHVVHPGVGMNINPADLHQGEIASYVEKSHDLTLVGFLMDIIPKTLLSPFVGDNILQVLFVAVLFGIALALAGERGKPVLNLLDALTLPVFKLVQMLMKMAPIGAFGAIAFTIGKYGVDSLVNLGWLVGSFYLTSLLFVLVILGAVSWFSGFSILKLIRYLKSELLLVLGTSSSEAALPSLMEKMVQAGCKKSVVGLVVPTGYSFNLDGTNIYMTLAALFIAQATNTELTPAHQLALFLVAMLSSKGAAGVSGAGFITLAATLTVVPEVPIAGMALILGVDRFMSECRSLTNFIGNAVATLVVSRWENALNHEQLKIALDGSEPAYQSLHAKDAEPSVSR.

A run of 8 helical transmembrane segments spans residues tyrosine 20–proline 42, isoleucine 62–valine 84, alanine 91–valine 113, isoleucine 164–alanine 181, leucine 202–lysine 224, serine 239–phenylalanine 261, leucine 344–isoleucine 366, and alanine 370–valine 389.

It belongs to the dicarboxylate/amino acid:cation symporter (DAACS) (TC 2.A.23) family.

The protein resides in the cell inner membrane. Responsible for the transport of dicarboxylates such as succinate, fumarate, and malate from the periplasm across the inner membrane. This is C4-dicarboxylate transport protein (dctA) from Xylella fastidiosa (strain 9a5c).